The following is a 258-amino-acid chain: Type III pantothenate kinase (258 aa).

6-13 provides a ligand contact to ATP; the sequence is DVGNTNTV. Residues Y100 and 107–110 contribute to the substrate site; that span reads GADR. The Proton acceptor role is filled by D109. D129 contributes to the K(+) binding site. Residue T132 participates in ATP binding. T184 serves as a coordination point for substrate.

The protein belongs to the type III pantothenate kinase family. Homodimer. NH4(+) is required as a cofactor. Requires K(+) as cofactor.

It localises to the cytoplasm. The enzyme catalyses (R)-pantothenate + ATP = (R)-4'-phosphopantothenate + ADP + H(+). The protein operates within cofactor biosynthesis; coenzyme A biosynthesis; CoA from (R)-pantothenate: step 1/5. In terms of biological role, catalyzes the phosphorylation of pantothenate (Pan), the first step in CoA biosynthesis. This Bacillus velezensis (strain DSM 23117 / BGSC 10A6 / LMG 26770 / FZB42) (Bacillus amyloliquefaciens subsp. plantarum) protein is Type III pantothenate kinase.